Here is a 70-residue protein sequence, read N- to C-terminus: Small ribosomal subunit protein bS21B (70 aa).

This sequence belongs to the bacterial ribosomal protein bS21 family.

This Cupriavidus metallidurans (strain ATCC 43123 / DSM 2839 / NBRC 102507 / CH34) (Ralstonia metallidurans) protein is Small ribosomal subunit protein bS21B.